The following is a 1105-amino-acid chain: Tubulin-folding cofactor D (1105 aa).

N-linked (GlcNAc...) asparagine glycosylation is found at Asn122 and Asn126. 4 HEAT repeats span residues 308 to 345, 347 to 385, 401 to 446, and 452 to 489; these read IYLE…RLPW, LAEQ…WHGA, SKCL…CYSK, and LQTN…RHAS. Asn373 carries an N-linked (GlcNAc...) asparagine glycan. Asn721, Asn883, and Asn1083 each carry an N-linked (GlcNAc...) asparagine glycan.

Interacts with alp21.

It is found in the cytoplasm. It localises to the cytoskeleton. Functionally, has a function in the folding of beta-tubulin. Microtubule-associated protein that is essential to direct polarized cell growth and to position the nucleus and septum to the center of the cell during mitosis. The polypeptide is Tubulin-folding cofactor D (alp1) (Schizosaccharomyces pombe (strain 972 / ATCC 24843) (Fission yeast)).